A 669-amino-acid chain; its full sequence is Cysteine-rich receptor-like protein kinase 34 (669 aa).

The first 23 residues, Met1–Ala23, serve as a signal peptide directing secretion. 2 Gnk2-homologous domains span residues Gln24 to Phe123 and Glu133 to Tyr246. Topologically, residues Gln24–Gly285 are extracellular. Residues Asn35, Asn52, Asn103, Asn120, Asn147, Asn172, Asn252, and Asn280 are each glycosylated (N-linked (GlcNAc...) asparagine). The helical transmembrane segment at Ile286–Val306 threads the bilayer. At Val307–Arg669 the chain is on the cytoplasmic side. The Protein kinase domain maps to Phe345 to Leu624. Residues Ile351–Val359 and Lys373 contribute to the ATP site. A Phosphotyrosine modification is found at Tyr418. Asp470 serves as the catalytic Proton acceptor. Residue Ser474 is modified to Phosphoserine. Thr510 is subject to Phosphothreonine. Tyr518 carries the post-translational modification Phosphotyrosine.

This sequence belongs to the protein kinase superfamily. Ser/Thr protein kinase family. CRK subfamily.

Its subcellular location is the membrane. The enzyme catalyses L-seryl-[protein] + ATP = O-phospho-L-seryl-[protein] + ADP + H(+). The catalysed reaction is L-threonyl-[protein] + ATP = O-phospho-L-threonyl-[protein] + ADP + H(+). The chain is Cysteine-rich receptor-like protein kinase 34 from Arabidopsis thaliana (Mouse-ear cress).